A 164-amino-acid chain; its full sequence is Large ribosomal subunit protein bL9 (164 aa).

It belongs to the bacterial ribosomal protein bL9 family.

In terms of biological role, binds to the 23S rRNA. The protein is Large ribosomal subunit protein bL9 of Borrelia recurrentis (strain A1).